We begin with the raw amino-acid sequence, 899 residues long: Translation initiation factor IF-2 (899 aa).

2 disordered regions span residues 31–227 and 240–310; these read KKAE…ATEQ and VTTS…GFDK. Composition is skewed to polar residues over residues 36-47 and 73-87; these read NVSQTEKQSLLS and STLS…SKSV. Basic and acidic residues-rich tracts occupy residues 101 to 173, 181 to 219, and 247 to 261; these read SALE…EKAK, AKSE…ETNE, and RAAE…ETTG. Residues 296 to 308 show a composition bias toward polar residues; the sequence is PQVNAPTSMQQGF. The region spanning 398–565 is the tr-type G domain; sequence SRAPVVTIMG…AILLQSEILE (168 aa). Positions 407–414 are G1; sequence GHVDHGKT. GTP is bound at residue 407–414; sequence GHVDHGKT. The segment at 432–436 is G2; sequence GITQH. The tract at residues 453-456 is G3; it reads DTPG. Residues 453-457 and 507-510 each bind GTP; these read DTPGH and NKID. Positions 507–510 are G4; it reads NKID. Positions 543-545 are G5; it reads SAK.

It belongs to the TRAFAC class translation factor GTPase superfamily. Classic translation factor GTPase family. IF-2 subfamily.

It is found in the cytoplasm. Functionally, one of the essential components for the initiation of protein synthesis. Protects formylmethionyl-tRNA from spontaneous hydrolysis and promotes its binding to the 30S ribosomal subunits. Also involved in the hydrolysis of GTP during the formation of the 70S ribosomal complex. The protein is Translation initiation factor IF-2 of Photobacterium profundum (strain SS9).